A 343-amino-acid chain; its full sequence is Aspartate carbamoyltransferase catalytic subunit (343 aa).

Residues R71 and T72 each coordinate carbamoyl phosphate. An L-aspartate-binding site is contributed by K99. Carbamoyl phosphate is bound by residues R121, H149, and Q152. 2 residues coordinate L-aspartate: R195 and R249. Carbamoyl phosphate-binding residues include G290 and P291.

The protein belongs to the aspartate/ornithine carbamoyltransferase superfamily. ATCase family. Heterododecamer (2C3:3R2) of six catalytic PyrB chains organized as two trimers (C3), and six regulatory PyrI chains organized as three dimers (R2).

It catalyses the reaction carbamoyl phosphate + L-aspartate = N-carbamoyl-L-aspartate + phosphate + H(+). It functions in the pathway pyrimidine metabolism; UMP biosynthesis via de novo pathway; (S)-dihydroorotate from bicarbonate: step 2/3. Its function is as follows. Catalyzes the condensation of carbamoyl phosphate and aspartate to form carbamoyl aspartate and inorganic phosphate, the committed step in the de novo pyrimidine nucleotide biosynthesis pathway. This chain is Aspartate carbamoyltransferase catalytic subunit, found in Rhodopirellula baltica (strain DSM 10527 / NCIMB 13988 / SH1).